The sequence spans 384 residues: H-2 class I histocompatibility antigen, TLA(B) alpha chain (384 aa).

A signal peptide spans 1–26 (MRMGTPVPGTLLILLAASQGQTQTCP). An alpha-1 region spans residues 27–116 (GSHSLRYFYT…MLDYYNLSQN (90 aa)). The Extracellular segment spans residues 27-314 (GSHSLRYFYT…TSMPNRTTVR (288 aa)). N-linked (GlcNAc...) asparagine glycosylation is found at Asn-63, Asn-112, and Asn-116. Residues 117 to 208 (GSHTIQVMYG…ENRKKTQECT (92 aa)) form an alpha-2 region. 2 cysteine pairs are disulfide-bonded: Cys-127-Cys-190 and Cys-229-Cys-285. The interval 209 to 300 (DPPKTHVTHH…GLPEPLTLRW (92 aa)) is alpha-3. In terms of domain architecture, Ig-like C1-type spans 211 to 299 (PKTHVTHHPR…EGLPEPLTLR (89 aa)). Residues 301–314 (EPPQTSMPNRTTVR) are connecting peptide. Residue Asn-309 is glycosylated (N-linked (GlcNAc...) asparagine). A helical membrane pass occupies residues 315–334 (ALLGAMIILGFMSGSVMMWM). The Cytoplasmic segment spans residues 335 to 384 (RKNNGGNGDDNTAAYQNEREHLSLDPRAESEALGVEAGMKDLPSAPPLVS). The segment covering 354–364 (EHLSLDPRAES) has biased composition (basic and acidic residues). The segment at 354–384 (EHLSLDPRAESEALGVEAGMKDLPSAPPLVS) is disordered.

It belongs to the MHC class I family. As to quaternary structure, heterodimer of an alpha chain and a beta chain (beta-2-microglobulin). TL antigens are only expressed on thymocytes, activated T-lymphocytes and on some thymic leukemias.

Its subcellular location is the membrane. In terms of biological role, involved in the presentation of foreign antigens to the immune system. The polypeptide is H-2 class I histocompatibility antigen, TLA(B) alpha chain (H2-T3) (Mus musculus (Mouse)).